The following is a 216-amino-acid chain: UPF0502 protein VCM66_A0698 (216 aa).

Belongs to the UPF0502 family.

The sequence is that of UPF0502 protein VCM66_A0698 from Vibrio cholerae serotype O1 (strain M66-2).